We begin with the raw amino-acid sequence, 235 residues long: Small ribosomal subunit protein uS3 (235 aa).

One can recognise a KH type-2 domain in the interval 39 to 107 (IRDFIKKECH…ELHLNIVEVR (69 aa)). The segment at 213–235 (AARDRKAQELQDGPAPRGAGGRR) is disordered.

This sequence belongs to the universal ribosomal protein uS3 family. As to quaternary structure, part of the 30S ribosomal subunit. Forms a tight complex with proteins S10 and S14.

Binds the lower part of the 30S subunit head. Binds mRNA in the 70S ribosome, positioning it for translation. In Roseobacter denitrificans (strain ATCC 33942 / OCh 114) (Erythrobacter sp. (strain OCh 114)), this protein is Small ribosomal subunit protein uS3.